Here is a 162-residue protein sequence, read N- to C-terminus: Interleukin-15 (162 aa).

The first 29 residues, 1–29, serve as a signal peptide directing secretion; the sequence is MRILKPYLRSTSIQCYLCLLLNSHFLTEA. A propeptide spanning residues 30–48 is cleaved from the precursor; the sequence is CIPVFILSCINAGLPKTEA. Disulfide bonds link cysteine 83-cysteine 133 and cysteine 90-cysteine 136. N-linked (GlcNAc...) asparagine glycosylation is found at asparagine 104 and asparagine 127.

This sequence belongs to the IL-15/IL-21 family.

The protein resides in the secreted. In terms of biological role, cytokine that plays a major role in the development of inflammatory and protective immune responses to microbial invaders and parasites by modulating immune cells of both the innate and adaptive immune systems. Stimulates the proliferation of natural killer cells, T-cells and B-cells and promotes the secretion of several cytokines. In monocytes, induces the production of IL8 and monocyte chemotactic protein 1/CCL2, two chemokines that attract neutrophils and monocytes respectively to sites of infection. Unlike most cytokines, which are secreted in soluble form, IL15 is expressed in association with its high affinity IL15RA on the surface of IL15-producing cells and delivers signals to target cells that express IL2RB and IL2RG receptor subunits. Binding to its receptor triggers the phosphorylation of JAK1 and JAK3 and the recruitment and subsequent phosphorylation of signal transducer and activator of transcription-3/STAT3 and STAT5. In mast cells, induces the rapid tyrosine phosphorylation of STAT6 and thereby controls mast cell survival and release of cytokines such as IL4. This is Interleukin-15 (IL15) from Felis catus (Cat).